Here is a 286-residue protein sequence, read N- to C-terminus: 33 kDa chaperonin (286 aa).

2 cysteine pairs are disulfide-bonded: C225-C227 and C258-C261.

It belongs to the HSP33 family. Post-translationally, under oxidizing conditions two disulfide bonds are formed involving the reactive cysteines. Under reducing conditions zinc is bound to the reactive cysteines and the protein is inactive.

Its subcellular location is the cytoplasm. In terms of biological role, redox regulated molecular chaperone. Protects both thermally unfolding and oxidatively damaged proteins from irreversible aggregation. Plays an important role in the bacterial defense system toward oxidative stress. This chain is 33 kDa chaperonin, found in Shewanella putrefaciens (strain CN-32 / ATCC BAA-453).